Reading from the N-terminus, the 293-residue chain is Elongation factor Ts (293 aa).

Positions 80 to 83 (TDFV) are involved in Mg(2+) ion dislocation from EF-Tu.

It belongs to the EF-Ts family.

It is found in the cytoplasm. Associates with the EF-Tu.GDP complex and induces the exchange of GDP to GTP. It remains bound to the aminoacyl-tRNA.EF-Tu.GTP complex up to the GTP hydrolysis stage on the ribosome. This is Elongation factor Ts from Enterococcus faecalis (strain ATCC 700802 / V583).